A 580-amino-acid polypeptide reads, in one-letter code: CDKN2A-interacting protein (580 aa).

An N-acetylalanine modification is found at alanine 2. The XRN2-binding (XTBD) domain maps to valine 19 to serine 133. The interval glycine 129–serine 356 is disordered. Serine 131 bears the Phosphoserine mark. Over residues glutamate 155–arginine 167 the composition is skewed to basic and acidic residues. Positions alanine 168–isoleucine 179 are enriched in polar residues. Lysine 184 participates in a covalent cross-link: Glycyl lysine isopeptide (Lys-Gly) (interchain with G-Cter in SUMO1). The span at serine 185–glycine 228 shows a compositional bias: low complexity. Positions serine 231–glycine 240 are enriched in basic and acidic residues. Residue serine 241 is modified to Phosphoserine. Positions leucine 248–proline 269 are enriched in polar residues. Composition is skewed to low complexity over residues leucine 274–glutamate 313 and serine 321–serine 356. Threonine 346 bears the Phosphothreonine mark. Serine 389 carries the post-translational modification Phosphoserine. The 76-residue stretch at asparagine 462–lysine 537 folds into the DRBM domain.

Belongs to the CARF family. Interacts with CDKN2A/p14ARF, p53/TP53 and MDM2. Interacts with CHEK2 and MAPK3. Interacts with XRN2. May be ubiquitinated. Ubiquitously expressed.

Its subcellular location is the nucleus. It is found in the nucleoplasm. Regulates DNA damage response in a dose-dependent manner through a number of signaling pathways involved in cell proliferation, apoptosis and senescence. In Homo sapiens (Human), this protein is CDKN2A-interacting protein (CDKN2AIP).